A 343-amino-acid chain; its full sequence is Probable dual-specificity RNA methyltransferase RlmN (343 aa).

Glu94 acts as the Proton acceptor in catalysis. The Radical SAM core domain occupies 100–330 (YDSRVTVCVS…ATVRMSMGSD (231 aa)). A disulfide bond links Cys107 and Cys335. [4Fe-4S] cluster contacts are provided by Cys114, Cys118, and Cys121. S-adenosyl-L-methionine-binding positions include 161 to 162 (GE), Ser193, 216 to 218 (SLH), and Asn292. The active-site S-methylcysteine intermediate is the Cys335.

Belongs to the radical SAM superfamily. RlmN family. [4Fe-4S] cluster is required as a cofactor.

It localises to the cytoplasm. It catalyses the reaction adenosine(2503) in 23S rRNA + 2 reduced [2Fe-2S]-[ferredoxin] + 2 S-adenosyl-L-methionine = 2-methyladenosine(2503) in 23S rRNA + 5'-deoxyadenosine + L-methionine + 2 oxidized [2Fe-2S]-[ferredoxin] + S-adenosyl-L-homocysteine. It carries out the reaction adenosine(37) in tRNA + 2 reduced [2Fe-2S]-[ferredoxin] + 2 S-adenosyl-L-methionine = 2-methyladenosine(37) in tRNA + 5'-deoxyadenosine + L-methionine + 2 oxidized [2Fe-2S]-[ferredoxin] + S-adenosyl-L-homocysteine. In terms of biological role, specifically methylates position 2 of adenine 2503 in 23S rRNA and position 2 of adenine 37 in tRNAs. The polypeptide is Probable dual-specificity RNA methyltransferase RlmN (Clostridioides difficile (strain 630) (Peptoclostridium difficile)).